A 277-amino-acid chain; its full sequence is Putative phosphoenolpyruvate synthase regulatory protein (277 aa).

157–164 provides a ligand contact to ADP; sequence GVSRSGKT.

The protein belongs to the pyruvate, phosphate/water dikinase regulatory protein family. PSRP subfamily.

The enzyme catalyses [pyruvate, water dikinase] + ADP = [pyruvate, water dikinase]-phosphate + AMP + H(+). The catalysed reaction is [pyruvate, water dikinase]-phosphate + phosphate + H(+) = [pyruvate, water dikinase] + diphosphate. Functionally, bifunctional serine/threonine kinase and phosphorylase involved in the regulation of the phosphoenolpyruvate synthase (PEPS) by catalyzing its phosphorylation/dephosphorylation. The polypeptide is Putative phosphoenolpyruvate synthase regulatory protein (Vibrio vulnificus (strain CMCP6)).